Here is a 127-residue protein sequence, read N- to C-terminus: Fatty acid binding protein 1-A, liver (127 aa).

Belongs to the calycin superfamily. Fatty-acid binding protein (FABP) family. In adults, weakly expressed in the intestine.

The protein localises to the cytoplasm. Binds free fatty acids and their coenzyme A derivatives, bilirubin, and some other small molecules in the cytoplasm. May be involved in intracellular lipid transport. The polypeptide is Fatty acid binding protein 1-A, liver (Danio rerio (Zebrafish)).